Consider the following 545-residue polypeptide: ATP synthase subunit alpha (545 aa).

ATP is bound at residue 172–179 (GDRKTGKT).

The protein belongs to the ATPase alpha/beta chains family. F-type ATPases have 2 components, CF(1) - the catalytic core - and CF(0) - the membrane proton channel. CF(1) has five subunits: alpha(3), beta(3), gamma(1), delta(1), epsilon(1). CF(0) has three main subunits: a(1), b(2) and c(9-12). The alpha and beta chains form an alternating ring which encloses part of the gamma chain. CF(1) is attached to CF(0) by a central stalk formed by the gamma and epsilon chains, while a peripheral stalk is formed by the delta and b chains.

It is found in the cell membrane. It carries out the reaction ATP + H2O + 4 H(+)(in) = ADP + phosphate + 5 H(+)(out). Functionally, produces ATP from ADP in the presence of a proton gradient across the membrane. The alpha chain is a regulatory subunit. This Corynebacterium urealyticum (strain ATCC 43042 / DSM 7109) protein is ATP synthase subunit alpha.